The primary structure comprises 196 residues: Peptide deformylase (196 aa).

Cys-105 and His-147 together coordinate Fe cation. Glu-148 is an active-site residue. His-151 serves as a coordination point for Fe cation.

Belongs to the polypeptide deformylase family. Fe(2+) is required as a cofactor.

The enzyme catalyses N-terminal N-formyl-L-methionyl-[peptide] + H2O = N-terminal L-methionyl-[peptide] + formate. Removes the formyl group from the N-terminal Met of newly synthesized proteins. Requires at least a dipeptide for an efficient rate of reaction. N-terminal L-methionine is a prerequisite for activity but the enzyme has broad specificity at other positions. In Christiangramia forsetii (strain DSM 17595 / CGMCC 1.15422 / KT0803) (Gramella forsetii), this protein is Peptide deformylase.